A 1298-amino-acid polypeptide reads, in one-letter code: Ras guanine nucleotide exchange factor Q (1298 aa).

Disordered regions lie at residues 1-26 (MDINNNIDNITNSNNNIEKNNNINNF), 46-88 (NNNI…SIEG), 211-271 (NISN…GPLK), 314-384 (YTPP…QQQQ), and 459-533 (LSNG…STTT). Low complexity-rich tracts occupy residues 211–245 (NISNNNNNNNNNSNNSNNNNNMSSSDNNNNSNSNN) and 315–384 (TPPS…QQQQ). A coiled-coil region spans residues 352–389 (SSLNANNNTNNNNQQLQQQQQQQQQQQLQQQQQLTKSY). The span at 473-482 (LHLSTESTTS) shows a compositional bias: polar residues. Low complexity-rich tracts occupy residues 483–501 (NNNNNNNNNNNNNNNNNNN) and 508–533 (TTNSATTTTTTTTTTTTTTTTNSTTT). An N-terminal Ras-GEF domain is found at 550-689 (DKDEVIAGER…YLKKAINDSG (140 aa)). In terms of domain architecture, DEP spans 723–801 (MSQSLQLKER…SSSSTTTTTT (79 aa)). 2 disordered regions span residues 781–864 (SKSG…PNSI) and 884–920 (GIANGSSTPSIPSSVTSPLTNSKSTLNSTPSSSSNSF). Residues 783-864 (SGSSFSPSSS…ITSTSLPNSI (82 aa)) are compositionally biased toward low complexity. Positions 964–1193 (HPVEIARQLT…YKASHMIEQP (230 aa)) constitute a Ras-GEF domain. The interval 1214-1267 (TTTTTNNLNNNNNNNNPNNNNNNNNNSANNKSSPSPSPSSSPITSSPISSLTIN) is disordered.

In terms of biological role, promotes the exchange of Ras-bound GDP by GTP. Seems to play a role in chemotaxis. This is Ras guanine nucleotide exchange factor Q (gefQ) from Dictyostelium discoideum (Social amoeba).